The primary structure comprises 155 residues: Cardioactive peptide (155 aa).

Positions 1–23 are cleaved as a signal peptide; sequence MRTSMRISLRLLALLACAICSQA. A propeptide spanning residues 24–49 is cleaved from the precursor; it reads SLERENNEGTNMANHKLSGVIQWKYE. A disulfide bridge links Cys-54 with Cys-60. Position 60 is a cysteine amide (Cys-60). Residues 64-155 constitute a propeptide that is removed on maturation; sequence RTYPSYPPFS…MQQLEERESK (92 aa). Residues 135-155 form a disordered region; sequence NKQKMLQNEKEMQQLEERESK. The segment covering 141–155 has biased composition (basic and acidic residues); the sequence is QNEKEMQQLEERESK.

As to expression, central nervous system; most neurons exhibit coexpression with Burs.

It localises to the secreted. Cardioregulatory neurohormone that increases heart beat rate during adult wing inflation; has no effect on beat amplitude. The effect of CCAP is both ino- and chronotropic. The sequence is that of Cardioactive peptide from Drosophila melanogaster (Fruit fly).